The sequence spans 65 residues: MKMSILFLFALIASLACLQLTFAAPAASPLANPGASPEAAPLADPLADPFMPIIGRLMSGSLGKK.

An N-terminal signal peptide occupies residues 1-23 (MKMSILFLFALIASLACLQLTFA). AXPX repeat units follow at residues 23-26 (AAPA), 27-30 (ASPL), 31-34 (ANPG), 35-38 (ASPE), 39-42 (AAPL), 43-46 (ADPL), and 47-50 (ADPF). Positions 24–49 (APAASPLANPGASPEAAPLADPLADP) are excised as a propeptide. Leu62 is modified (leucine amide).

As to expression, expressed by the venom gland.

It is found in the secreted. Its function is as follows. Antimicrobial peptide. Shows activity against both Gram-positive (S.aureus MIC=1.0-3.75 ug/ml) and -negative (E.coli MIC=7.5-15 ug/ml) bacteria, as well against fungi (C.albicans MIC=30 ug/ml). Also promotes important mast cell degranulation. Shows little hemolytic activity on rabbit and human erythrocytes. Its mast cell degranulation activity may be related to the activation of G-protein coupled receptors in mast cells as well as interaction with other proteins located in cell endosomal membranes in the mast cells. The protein is VESP-VB1 of Vespa bicolor (Black shield wasp).